The following is a 289-amino-acid chain: ADP-polyphosphate phosphotransferase (289 aa).

This sequence belongs to the polyphosphate kinase 2 (PPK2) family. Class I subfamily.

The enzyme catalyses [phosphate](n) + ATP = [phosphate](n+1) + ADP. In terms of biological role, uses inorganic polyphosphate (polyP) as a donor to convert ADP to ATP. The protein is ADP-polyphosphate phosphotransferase of Rhodopseudomonas palustris (strain ATCC BAA-98 / CGA009).